We begin with the raw amino-acid sequence, 425 residues long: Transmembrane protein 184A (425 aa).

Transmembrane regions (helical) follow at residues 51 to 71 (LFLTSALARGVSGVFVWTALL), 96 to 116 (LLFIVPIYAFDSWLSLLLLGG), 133 to 153 (FVIYSFLTLCFQYLGGESAIM), 189 to 209 (TLQFCIVKPVMALITIILQAF), 226 to 246 (VTLVYNASVSLALYALFLFYF), 261 to 281 (FLTIKAIIFLSFWQGMLLAIL), and 303 to 323 (LAAGYQNFLICIEMLFASLAL). The segment at 375–425 (QYTQQSTHEAPGPGQGGHPSPSTHPGPASGSGGGKKSRNIEKRMLIPSEDL) is disordered. Low complexity predominate over residues 392-402 (HPSPSTHPGPA).

It belongs to the TMEM184 family. In terms of tissue distribution, expressed in vascular cells (at protein level).

The protein resides in the cell membrane. Its subcellular location is the cytoplasm. It localises to the perinuclear region. It is found in the early endosome membrane. The protein localises to the endosome. The protein resides in the cytoplasmic vesicle. Its subcellular location is the secretory vesicle membrane. It localises to the cytoplasmic vesicle membrane. Its function is as follows. Acts as a heparin receptor in vascular cells. May be involved in vesicle transport in exocrine cells and Sertoli cells. The chain is Transmembrane protein 184A (Tmem184a) from Rattus norvegicus (Rat).